The following is a 463-amino-acid chain: Ribulose bisphosphate carboxylase large chain (463 aa).

Lys-5 bears the N6,N6,N6-trimethyllysine mark. Substrate is bound by residues Asn-114 and Thr-164. The Proton acceptor role is filled by Lys-166. Lys-168 contributes to the substrate binding site. Mg(2+) is bound by residues Lys-192, Asp-194, and Glu-195. N6-carboxylysine is present on Lys-192. His-285 serves as the catalytic Proton acceptor. Positions 286, 318, and 370 each coordinate substrate.

Belongs to the RuBisCO large chain family. Type I subfamily. As to quaternary structure, heterohexadecamer of 8 large chains and 8 small chains; disulfide-linked. The disulfide link is formed within the large subunit homodimers. It depends on Mg(2+) as a cofactor. The disulfide bond which can form in the large chain dimeric partners within the hexadecamer appears to be associated with oxidative stress and protein turnover.

It is found in the plastid. The protein resides in the chloroplast. The enzyme catalyses 2 (2R)-3-phosphoglycerate + 2 H(+) = D-ribulose 1,5-bisphosphate + CO2 + H2O. The catalysed reaction is D-ribulose 1,5-bisphosphate + O2 = 2-phosphoglycolate + (2R)-3-phosphoglycerate + 2 H(+). Functionally, ruBisCO catalyzes two reactions: the carboxylation of D-ribulose 1,5-bisphosphate, the primary event in carbon dioxide fixation, as well as the oxidative fragmentation of the pentose substrate in the photorespiration process. Both reactions occur simultaneously and in competition at the same active site. The sequence is that of Ribulose bisphosphate carboxylase large chain from Pelargonium grandiflorum (Geranium).